The sequence spans 468 residues: GTPase Der (468 aa).

EngA-type G domains follow at residues 3-169 (PVMA…SPPD) and 199-372 (IRLA…KAAT). Residues 9 to 16 (GRANVGKS), 56 to 60 (DTGGF), 119 to 122 (NKAE), 205 to 212 (GRPNVGKS), 252 to 256 (DTAGL), and 317 to 320 (NKWD) each bind GTP. A KH-like domain is found at 373–457 (CKMSTPVLTR…PLRIELKTSH (85 aa)).

This sequence belongs to the TRAFAC class TrmE-Era-EngA-EngB-Septin-like GTPase superfamily. EngA (Der) GTPase family. As to quaternary structure, associates with the 50S ribosomal subunit.

Its function is as follows. GTPase that plays an essential role in the late steps of ribosome biogenesis. The sequence is that of GTPase Der from Verminephrobacter eiseniae (strain EF01-2).